Reading from the N-terminus, the 122-residue chain is Vitelline membrane protein Vm32E (122 aa).

An N-terminal signal peptide occupies residues 1–19 (MKTVAFLAVVVLFAAFACA). The VM domain maps to 40 to 79 (SVPAPPCPKNYLFSCQPNLVPAPCAQQAAPAAYGSAGAYT).

Belongs to the vitelline membrane family.

The protein localises to the secreted. In terms of biological role, major early eggshell protein. This chain is Vitelline membrane protein Vm32E, found in Drosophila persimilis (Fruit fly).